Consider the following 202-residue polypeptide: Glycerol-3-phosphate acyltransferase (202 aa).

5 consecutive transmembrane segments (helical) span residues 3–23 (NLII…LILA), 87–107 (LLWS…YLLF), 118–138 (GAMI…WVVI), 144–164 (ISSL…FIFN), and 167–187 (LEIH…YKHL).

It belongs to the PlsY family. In terms of assembly, probably interacts with PlsX.

The protein resides in the cell inner membrane. The enzyme catalyses an acyl phosphate + sn-glycerol 3-phosphate = a 1-acyl-sn-glycero-3-phosphate + phosphate. The protein operates within lipid metabolism; phospholipid metabolism. In terms of biological role, catalyzes the transfer of an acyl group from acyl-phosphate (acyl-PO(4)) to glycerol-3-phosphate (G3P) to form lysophosphatidic acid (LPA). This enzyme utilizes acyl-phosphate as fatty acyl donor, but not acyl-CoA or acyl-ACP. The protein is Glycerol-3-phosphate acyltransferase of Campylobacter jejuni (strain RM1221).